Consider the following 160-residue polypeptide: 2-C-methyl-D-erythritol 2,4-cyclodiphosphate synthase (160 aa).

A divalent metal cation is bound by residues D9 and H11. 4-CDP-2-C-methyl-D-erythritol 2-phosphate-binding positions include 9–11 (DVH) and 35–36 (HS). H43 lines the a divalent metal cation pocket. 4-CDP-2-C-methyl-D-erythritol 2-phosphate contacts are provided by residues 57–59 (DIG), 62–66 (FPDTD), 133–136 (TTTE), F140, and R143.

This sequence belongs to the IspF family. Homotrimer. Requires a divalent metal cation as cofactor.

The catalysed reaction is 4-CDP-2-C-methyl-D-erythritol 2-phosphate = 2-C-methyl-D-erythritol 2,4-cyclic diphosphate + CMP. The protein operates within isoprenoid biosynthesis; isopentenyl diphosphate biosynthesis via DXP pathway; isopentenyl diphosphate from 1-deoxy-D-xylulose 5-phosphate: step 4/6. Involved in the biosynthesis of isopentenyl diphosphate (IPP) and dimethylallyl diphosphate (DMAPP), two major building blocks of isoprenoid compounds. Catalyzes the conversion of 4-diphosphocytidyl-2-C-methyl-D-erythritol 2-phosphate (CDP-ME2P) to 2-C-methyl-D-erythritol 2,4-cyclodiphosphate (ME-CPP) with a corresponding release of cytidine 5-monophosphate (CMP). The chain is 2-C-methyl-D-erythritol 2,4-cyclodiphosphate synthase from Haemophilus ducreyi (strain 35000HP / ATCC 700724).